The sequence spans 328 residues: Endochitinase (328 aa).

An N-terminal signal peptide occupies residues 1 to 26; that stretch reads MRRHKEVNFVAYLLFSLLVLVSAALA. Residues 27–68 enclose the Chitin-binding type-1 domain; the sequence is QNCGSQGGGKACASGQCCSKFGWCGNTNDYCGSGNCQSQCPG. Intrachain disulfides connect cysteine 29–cysteine 44, cysteine 38–cysteine 50, cysteine 43–cysteine 57, cysteine 62–cysteine 66, cysteine 100–cysteine 162, cysteine 174–cysteine 182, and cysteine 281–cysteine 313. The Proton donor role is filled by glutamate 144. Residues 322–328 constitute a propeptide, removed in mature form; the sequence is ALLVDTL.

This sequence belongs to the glycosyl hydrolase 19 family. Chitinase class I subfamily.

The protein localises to the vacuole. The enzyme catalyses Random endo-hydrolysis of N-acetyl-beta-D-glucosaminide (1-&gt;4)-beta-linkages in chitin and chitodextrins.. Functionally, defense against chitin-containing fungal pathogens. This chain is Endochitinase, found in Solanum tuberosum (Potato).